The sequence spans 160 residues: Transcription antitermination protein NusB (160 aa).

This sequence belongs to the NusB family.

In terms of biological role, involved in transcription antitermination. Required for transcription of ribosomal RNA (rRNA) genes. Binds specifically to the boxA antiterminator sequence of the ribosomal RNA (rrn) operons. The polypeptide is Transcription antitermination protein NusB (Rhizobium leguminosarum bv. trifolii (strain WSM2304)).